Consider the following 438-residue polypeptide: Glutaryl-CoA dehydrogenase, mitochondrial (438 aa).

The transit peptide at 1–44 (MALRGVYAQLLNRGPGLRVFRSWSSATAQTEKGEKTQSRSAKPS) directs the protein to the mitochondrion. Substrate-binding positions include 138-139 (RS) and S186. FAD contacts are provided by residues 177-186 (FGLTEPNHGS), S186, and 212-214 (WIT). The residue at position 240 (K240) is an N6-acetyllysine. A substrate-binding site is contributed by 287 to 294 (FGCLNNAR). FAD contacts are provided by residues R319, Q330, and 387-391 (DMLGG). Catalysis depends on E414, which acts as the Proton acceptor. G415 provides a ligand contact to substrate. Residues T416, 416-418 (THD), and F434 each bind FAD.

It belongs to the acyl-CoA dehydrogenase family. Homotetramer. Requires FAD as cofactor.

Its subcellular location is the mitochondrion matrix. The catalysed reaction is glutaryl-CoA + oxidized [electron-transfer flavoprotein] + 2 H(+) = (2E)-butenoyl-CoA + reduced [electron-transfer flavoprotein] + CO2. It functions in the pathway amino-acid metabolism; lysine degradation. The protein operates within amino-acid metabolism; tryptophan metabolism. In terms of biological role, catalyzes the oxidative decarboxylation of glutaryl-CoA to crotonyl-CoA and CO(2) in the degradative pathway of L-lysine, L-hydroxylysine, and L-tryptophan metabolism. It uses electron transfer flavoprotein as its electron acceptor. This is Glutaryl-CoA dehydrogenase, mitochondrial (GCDH) from Bos taurus (Bovine).